We begin with the raw amino-acid sequence, 104 residues long: Interferon alpha-inducible protein 27-like protein 1 (104 aa).

3 helical membrane passes run 14 to 34 (VAAV…LSAM), 59 to 79 (GGGV…AAGL), and 81 to 101 (VTSK…LGSP).

It belongs to the IFI6/IFI27 family.

Its subcellular location is the membrane. Functionally, plays a role in the apoptotic process and has a pro-apoptotic activity. The protein is Interferon alpha-inducible protein 27-like protein 1 of Homo sapiens (Human).